Reading from the N-terminus, the 755-residue chain is Glucosylglycerol-phosphate synthase (755 aa).

It belongs to the glycosyltransferase 20 family.

The catalysed reaction is ADP-alpha-D-glucose + sn-glycerol 3-phosphate = 2-O-(alpha-D-glucopyranosyl)-sn-glycerol 3-phosphate + ADP + H(+). Its pathway is glycan metabolism; glucosylglycerol biosynthesis. Involved in salt tolerance by producing GG-phosphate from ADP-glucose and glycerol-3-phosphate (G3P), an intermediate in the synthesis of the osmolyte glucosylglycerol (GG). This is Glucosylglycerol-phosphate synthase (ggpS) from Pseudomonas anguilliseptica.